The following is a 318-amino-acid chain: Pyrimidine-specific ribonucleoside hydrolase RihA (318 aa).

H240 is a catalytic residue.

Belongs to the IUNH family. RihA subfamily.

Functionally, hydrolyzes cytidine or uridine to ribose and cytosine or uracil, respectively. This is Pyrimidine-specific ribonucleoside hydrolase RihA from Shewanella oneidensis (strain ATCC 700550 / JCM 31522 / CIP 106686 / LMG 19005 / NCIMB 14063 / MR-1).